The following is a 94-amino-acid chain: Integration host factor subunit beta (94 aa).

Belongs to the bacterial histone-like protein family. Heterodimer of an alpha and a beta chain.

This protein is one of the two subunits of integration host factor, a specific DNA-binding protein that functions in genetic recombination as well as in transcriptional and translational control. The sequence is that of Integration host factor subunit beta from Serratia proteamaculans (strain 568).